Consider the following 362-residue polypeptide: Phosphoserine aminotransferase (362 aa).

Residue Arg-42 coordinates L-glutamate. 4 residues coordinate pyridoxal 5'-phosphate: Trp-102, Thr-154, Asp-174, and Gln-197. Lys-198 is subject to N6-(pyridoxal phosphate)lysine. 239–240 (NT) provides a ligand contact to pyridoxal 5'-phosphate.

Belongs to the class-V pyridoxal-phosphate-dependent aminotransferase family. SerC subfamily. Homodimer. The cofactor is pyridoxal 5'-phosphate.

It localises to the cytoplasm. It catalyses the reaction O-phospho-L-serine + 2-oxoglutarate = 3-phosphooxypyruvate + L-glutamate. The catalysed reaction is 4-(phosphooxy)-L-threonine + 2-oxoglutarate = (R)-3-hydroxy-2-oxo-4-phosphooxybutanoate + L-glutamate. It functions in the pathway amino-acid biosynthesis; L-serine biosynthesis; L-serine from 3-phospho-D-glycerate: step 2/3. It participates in cofactor biosynthesis; pyridoxine 5'-phosphate biosynthesis; pyridoxine 5'-phosphate from D-erythrose 4-phosphate: step 3/5. In terms of biological role, catalyzes the reversible conversion of 3-phosphohydroxypyruvate to phosphoserine and of 3-hydroxy-2-oxo-4-phosphonooxybutanoate to phosphohydroxythreonine. The sequence is that of Phosphoserine aminotransferase from Haemophilus ducreyi (strain 35000HP / ATCC 700724).